Consider the following 110-residue polypeptide: MELLKATVLFTITAVVEIVGCYLPWLVIKQNKPLWLLLPAALSLALFAWLLTLHPSAAGRTYAAYGGIYIAVALAWLHWVDGVSLTRWDVAGATVAMVGMLIIMLQPASA.

4 helical membrane-spanning segments follow: residues 8–28 (VLFT…WLVI), 33–53 (PLWL…LLTL), 63–83 (AAYG…VDGV), and 90–110 (VAGA…PASA).

The protein belongs to the UPF0060 family.

The protein localises to the cell inner membrane. This Verminephrobacter eiseniae (strain EF01-2) protein is UPF0060 membrane protein Veis_0342.